We begin with the raw amino-acid sequence, 198 residues long: V-type ATP synthase subunit E (198 aa).

The protein belongs to the V-ATPase E subunit family.

Its function is as follows. Produces ATP from ADP in the presence of a proton gradient across the membrane. In Acetivibrio thermocellus (strain ATCC 27405 / DSM 1237 / JCM 9322 / NBRC 103400 / NCIMB 10682 / NRRL B-4536 / VPI 7372) (Clostridium thermocellum), this protein is V-type ATP synthase subunit E.